Here is a 137-residue protein sequence, read N- to C-terminus: Large ribosomal subunit protein uL16 (137 aa).

The protein belongs to the universal ribosomal protein uL16 family. As to quaternary structure, part of the 50S ribosomal subunit.

In terms of biological role, binds 23S rRNA and is also seen to make contacts with the A and possibly P site tRNAs. The protein is Large ribosomal subunit protein uL16 of Dinoroseobacter shibae (strain DSM 16493 / NCIMB 14021 / DFL 12).